The primary structure comprises 115 residues: Variant surface glycoprotein ANTAT 1.8 (115 aa).

N42 carries N-linked (GlcNAc...) asparagine glycosylation. D92 carries GPI-anchor amidated aspartate lipidation. Residues 93–115 (SSILVNKQLALSVVSAAFAALLF) constitute a propeptide, removed in mature form.

Its subcellular location is the cell membrane. Its function is as follows. VSG forms a coat on the surface of the parasite. The trypanosome evades the immune response of the host by expressing a series of antigenically distinct VSGs from an estimated 1000 VSG genes. The chain is Variant surface glycoprotein ANTAT 1.8 from Trypanosoma brucei brucei.